Here is a 326-residue protein sequence, read N- to C-terminus: Sucrose operon repressor (326 aa).

One can recognise an HTH lacI-type domain in the interval 1-57 (MKPKLNDVAKLAGVSATTVSRVINNHGYLSSQTKEKVFAAMRELHYQPNNMARSLQG). The H-T-H motif DNA-binding region spans 5–24 (LNDVAKLAGVSATTVSRVIN).

Negative regulator of scrB expression. This is Sucrose operon repressor (scrR) from Pediococcus pentosaceus.